Reading from the N-terminus, the 96-residue chain is Small ribosomal subunit protein bS6 (96 aa).

This sequence belongs to the bacterial ribosomal protein bS6 family.

In terms of biological role, binds together with bS18 to 16S ribosomal RNA. This is Small ribosomal subunit protein bS6 from Streptococcus equi subsp. equi (strain 4047).